The following is a 225-amino-acid chain: UPF0758 protein SZO_09140 (225 aa).

One can recognise an MPN domain in the interval 102-224 (PVLSSAQVAE…YYSFREKSDL (123 aa)). The Zn(2+) site is built by histidine 173, histidine 175, and aspartate 186. A JAMM motif motif is present at residues 173-186 (HNHPSGLTKPSAND).

The protein belongs to the UPF0758 family.

In Streptococcus equi subsp. zooepidemicus (strain H70), this protein is UPF0758 protein SZO_09140.